Reading from the N-terminus, the 650-residue chain is Zinc finger CCCH domain-containing protein 55 (650 aa).

The segment at 67–162 is disordered; it reads NSPSSTPTSP…THSGSADAAG (96 aa). Residues 105–128 show a composition bias toward low complexity; it reads SPSSPSSTSPWSFNNCINGNNGNN. Residues 141–154 are compositionally biased toward polar residues; sequence PFSSHQSNGLSATH. The C3H1-type zinc-finger motif lies at 232–254; sequence PCVYFSRGLCKNGESCKFIHGGY. Residues 357–433 form the RRM domain; the sequence is RQIYLTFPAD…RVLVKPYKEK (77 aa). The tract at residues 566–650 is disordered; it reads PVVNPMSVNN…PPVTTNNLMQ (85 aa). Over residues 581 to 590 the composition is skewed to basic and acidic residues; sequence AKEETNKSEL.

The protein is Zinc finger CCCH domain-containing protein 55 of Arabidopsis thaliana (Mouse-ear cress).